The primary structure comprises 162 residues: MGLETEKTDVQLFMDDDSYSHHSGLEYADPEKFADSGQDRDPHQLNSHLKLGFEDVIAEPVTTHSFDKVWICSHALFEISKYVMYKFLTVFLAIPLAFLAGILFATLSCLHIWIIMPFVKTCLMVLPSVQTIWKSVTDAIVAPLCTSIGRSFSSVSLQLSQD.

Topologically, residues Met-1 to Lys-86 are cytoplasmic. Tyr-19 carries the post-translational modification Phosphotyrosine; by SRC. 2 positions are modified to phosphoserine: Ser-20 and Ser-23. At Tyr-27 the chain carries Phosphotyrosine; by SRC. Residue Ser-36 is modified to Phosphoserine. The helical intramembrane region spans Phe-87 to Leu-107. The Cytoplasmic portion of the chain corresponds to Ser-108–Asp-162.

Belongs to the caveolin family. As to quaternary structure, monomer or homodimer. Interacts with CAV1; the interaction forms a stable heterooligomeric complex that is required for targeting to lipid rafts and for caveolae formation. Tyrosine phosphorylated forms do not form heterooligomers with the Tyr-19-phosphorylated form existing as a monomer or dimer, and the Tyr-27-form as a monomer only. Interacts (tyrosine phosphorylated form) with the SH2 domain-containing proteins, RASA1, NCK1 and SRC. Interacts (tyrosine phosphorylated form) with INSR, the interaction (Tyr-27-phosphorylated form) is increased on insulin stimulation. Interacts (Tyr-19 phosphorylated form) with MAPK1 (phosphorylated form); the interaction, promoted by insulin, leads to nuclear location and MAPK1 activation. Interacts with STAT3; the interaction is increased on insulin-induced tyrosine phosphorylation leading to STAT activation. Post-translationally, phosphorylated on serine and tyrosine residues. CAV1 promotes phosphorylation on Ser-23 which then targets the complex to the plasma membrane, lipid rafts and caveolae. Phosphorylation on Ser-36 appears to modulate mitosis in endothelial cells. Phosphorylation on both Tyr-19 and Tyr-27 is required for insulin-induced 'Ser-727' phosphorylation of STAT3 and its activation. Phosphorylation on Tyr-19 is required for insulin-induced phosphorylation of MAPK1 and DNA binding of STAT3. Tyrosine phosphorylation is induced by both EGF and insulin (By. similarity).

It is found in the nucleus. Its subcellular location is the cytoplasm. The protein localises to the golgi apparatus membrane. The protein resides in the cell membrane. It localises to the membrane. It is found in the caveola. Its function is as follows. May act as a scaffolding protein within caveolar membranes. Interacts directly with G-protein alpha subunits and can functionally regulate their activity. Acts as an accessory protein in conjunction with CAV1 in targeting to lipid rafts and driving caveolae formation. The Ser-36 phosphorylated form has a role in modulating mitosis in endothelial cells. Positive regulator of cellular mitogenesis of the MAPK signaling pathway. Required for the insulin-stimulated nuclear translocation and activation of MAPK1 and STAT3, and the subsequent regulation of cell cycle progression. The chain is Caveolin-2 (CAV2) from Aotus nancymaae (Ma's night monkey).